The following is a 129-amino-acid chain: uncharacterized protein (129 aa).

3 consecutive transmembrane segments (helical) span residues Ile15–Phe35, Ile48–Phe68, and Ile107–Cys127.

Its subcellular location is the membrane. This is an uncharacterized protein from Saccharomyces cerevisiae (strain ATCC 204508 / S288c) (Baker's yeast).